A 378-amino-acid polypeptide reads, in one-letter code: UDP-N-acetylglucosamine--N-acetylmuramyl-(pentapeptide) pyrophosphoryl-undecaprenol N-acetylglucosamine transferase (378 aa).

Residues 14–16 (TGG), Asn125, Arg165, Ser193, and Gln293 contribute to the UDP-N-acetyl-alpha-D-glucosamine site.

The protein belongs to the glycosyltransferase 28 family. MurG subfamily.

It localises to the cell inner membrane. It catalyses the reaction di-trans,octa-cis-undecaprenyl diphospho-N-acetyl-alpha-D-muramoyl-L-alanyl-D-glutamyl-meso-2,6-diaminopimeloyl-D-alanyl-D-alanine + UDP-N-acetyl-alpha-D-glucosamine = di-trans,octa-cis-undecaprenyl diphospho-[N-acetyl-alpha-D-glucosaminyl-(1-&gt;4)]-N-acetyl-alpha-D-muramoyl-L-alanyl-D-glutamyl-meso-2,6-diaminopimeloyl-D-alanyl-D-alanine + UDP + H(+). Its pathway is cell wall biogenesis; peptidoglycan biosynthesis. Functionally, cell wall formation. Catalyzes the transfer of a GlcNAc subunit on undecaprenyl-pyrophosphoryl-MurNAc-pentapeptide (lipid intermediate I) to form undecaprenyl-pyrophosphoryl-MurNAc-(pentapeptide)GlcNAc (lipid intermediate II). This is UDP-N-acetylglucosamine--N-acetylmuramyl-(pentapeptide) pyrophosphoryl-undecaprenol N-acetylglucosamine transferase from Bartonella henselae (strain ATCC 49882 / DSM 28221 / CCUG 30454 / Houston 1) (Rochalimaea henselae).